Consider the following 363-residue polypeptide: tRNA N6-adenosine threonylcarbamoyltransferase (363 aa).

Fe cation contacts are provided by His121 and His125. Substrate-binding positions include 143–147 (LASGG), Asp176, Gly189, and Asn287. Asp315 is a binding site for Fe cation.

It belongs to the KAE1 / TsaD family. Requires Fe(2+) as cofactor.

Its subcellular location is the cytoplasm. It carries out the reaction L-threonylcarbamoyladenylate + adenosine(37) in tRNA = N(6)-L-threonylcarbamoyladenosine(37) in tRNA + AMP + H(+). Its function is as follows. Required for the formation of a threonylcarbamoyl group on adenosine at position 37 (t(6)A37) in tRNAs that read codons beginning with adenine. Is involved in the transfer of the threonylcarbamoyl moiety of threonylcarbamoyl-AMP (TC-AMP) to the N6 group of A37, together with TsaE and TsaB. TsaD likely plays a direct catalytic role in this reaction. The sequence is that of tRNA N6-adenosine threonylcarbamoyltransferase from Rhodopseudomonas palustris (strain ATCC BAA-98 / CGA009).